The sequence spans 765 residues: Single-minded homolog 1 (765 aa).

The bHLH domain occupies 1-53 (MKEKSKNAARTRREKENSEFYELAKLLPLPSAITSQLDKASIIRLTTSYLKMR). PAS domains lie at 77–147 (GREL…QPYH) and 218–288 (PPSA…LVKG). Positions 292–335 (TKYYRFLAKQGGWVWVQSYATIVHNSRSSRPHCIVSVNYVLTDT) constitute a PAC domain. A Single-minded C-terminal domain is found at 336–765 (EYKGLQLSLD…GTSVIITNGS (430 aa)). Low complexity-rich tracts occupy residues 352 to 365 (PTFS…PTIS) and 373 to 385 (SRLS…SRTS). Disordered stretches follow at residues 352–428 (PTFS…PGSQ) and 527–560 (WDED…PHEP). A Nuclear localization signal motif is present at residues 368 to 387 (RKGAKSRLSSSKSKSRTSPY). The span at 394-404 (HTERSESDHDS) shows a compositional bias: basic and acidic residues.

In terms of assembly, efficient DNA binding requires dimerization with another bHLH protein. Heterodimer; forms a heterodimer with ARNT, ARNT2. As to expression, detected in lung, skeletal muscle and kidney. During fetal development it is found in the CNS, developing kidney, mesodermal and endodermal tissues, including developing somites, mesonephric duct, and foregut.

It localises to the nucleus. Functionally, transcriptional factor that may have pleiotropic effects during embryogenesis and in the adult. This is Single-minded homolog 1 (Sim1) from Mus musculus (Mouse).